Reading from the N-terminus, the 71-residue chain is Putative defensin-like protein 303 (71 aa).

Residues 1–25 form the signal peptide; it reads MKSNKATFFLGLLLVYAFCIMLIES. Cystine bridges form between C27–C45, C33–C50, and C39–C52.

The protein belongs to the DEFL family.

Its subcellular location is the secreted. The protein is Putative defensin-like protein 303 of Arabidopsis thaliana (Mouse-ear cress).